A 376-amino-acid chain; its full sequence is Phosphoglycerate kinase (376 aa).

The (2R)-3-phosphoglycerate site is built by valine 1, aspartate 2, phenylalanine 3, asparagine 4, arginine 17, serine 40, histidine 41, glycine 43, arginine 44, leucine 99, arginine 100, histidine 147, and arginine 148. An ADP-binding site is contributed by glycine 191. Glycine 191 provides a ligand contact to CDP. Residues alanine 192 and lysine 193 each contribute to the AMP site. Alanine 192 contacts ATP. Alanine 192 is a binding site for Mg(2+). Aspartate 196 lines the CDP pocket. Aspartate 196 provides a ligand contact to Mg(2+). Position 197 (lysine 197) interacts with AMP. Lysine 197 provides a ligand contact to ATP. Residue glycine 215 participates in ADP binding. Glycine 215 serves as a coordination point for CDP. 2 residues coordinate AMP: glycine 216 and glycine 290. ATP is bound by residues glycine 216 and glycine 290. Residues glycine 315 and phenylalanine 320 each coordinate CDP. Phenylalanine 320 provides a ligand contact to ADP. AMP is bound at residue glutamate 321. 3 residues coordinate ATP: glutamate 321, aspartate 352, and threonine 353. Aspartate 352 is a Mg(2+) binding site.

Belongs to the phosphoglycerate kinase family. As to quaternary structure, monomer. Mg(2+) is required as a cofactor.

The catalysed reaction is (2R)-3-phosphoglycerate + ATP = (2R)-3-phospho-glyceroyl phosphate + ADP. It participates in carbohydrate degradation; glycolysis; pyruvate from D-glyceraldehyde 3-phosphate: step 2/5. This chain is Phosphoglycerate kinase (PGK), found in Glaucoma chattoni.